We begin with the raw amino-acid sequence, 722 residues long: Polyribonucleotide nucleotidyltransferase (722 aa).

Residues aspartate 487 and aspartate 493 each coordinate Mg(2+). The KH domain maps to proline 554–isoleucine 613. Residues glycine 623–lysine 691 enclose the S1 motif domain.

Belongs to the polyribonucleotide nucleotidyltransferase family. The cofactor is Mg(2+).

It is found in the cytoplasm. It carries out the reaction RNA(n+1) + phosphate = RNA(n) + a ribonucleoside 5'-diphosphate. In terms of biological role, involved in mRNA degradation. Catalyzes the phosphorolysis of single-stranded polyribonucleotides processively in the 3'- to 5'-direction. This chain is Polyribonucleotide nucleotidyltransferase, found in Polynucleobacter necessarius subsp. necessarius (strain STIR1).